Here is a 295-residue protein sequence, read N- to C-terminus: Transcriptional regulator SirC (295 aa).

One can recognise an HTH araC/xylS-type domain in the interval 195 to 292 (EKVYNIIISD…KITPLSFMRT (98 aa)). 2 consecutive DNA-binding regions (H-T-H motif) follow at residues 212–233 (AEVA…AAEE) and 259–282 (ISQV…KRHF).

In terms of biological role, positive regulator of the expression of the invasion-associated type III secretion system encoded within SPI-1 (pathogenicity island 1). The sequence is that of Transcriptional regulator SirC (sirC) from Salmonella typhimurium (strain SL1344).